Here is a 351-residue protein sequence, read N- to C-terminus: Alanine racemase (351 aa).

Catalysis depends on K35, which acts as the Proton acceptor; specific for D-alanine. An N6-(pyridoxal phosphate)lysine modification is found at K35. A substrate-binding site is contributed by R127. Y247 acts as the Proton acceptor; specific for L-alanine in catalysis. M295 contributes to the substrate binding site.

The protein belongs to the alanine racemase family. Pyridoxal 5'-phosphate is required as a cofactor.

The catalysed reaction is L-alanine = D-alanine. It functions in the pathway amino-acid biosynthesis; D-alanine biosynthesis; D-alanine from L-alanine: step 1/1. Its function is as follows. Catalyzes the interconversion of L-alanine and D-alanine. May also act on other amino acids. The sequence is that of Alanine racemase (alr) from Vesicomyosocius okutanii subsp. Calyptogena okutanii (strain HA).